We begin with the raw amino-acid sequence, 337 residues long: DNA-directed RNA polymerase subunit alpha (337 aa).

Positions 1-233 (MIQKNWQELI…DQLSIFVNFE (233 aa)) are alpha N-terminal domain (alpha-NTD). The segment at 249 to 337 (FNPALLKKVD…DLAKRYEDQY (89 aa)) is alpha C-terminal domain (alpha-CTD).

The protein belongs to the RNA polymerase alpha chain family. In terms of assembly, homodimer. The RNAP catalytic core consists of 2 alpha, 1 beta, 1 beta' and 1 omega subunit. When a sigma factor is associated with the core the holoenzyme is formed, which can initiate transcription.

It carries out the reaction RNA(n) + a ribonucleoside 5'-triphosphate = RNA(n+1) + diphosphate. In terms of biological role, DNA-dependent RNA polymerase catalyzes the transcription of DNA into RNA using the four ribonucleoside triphosphates as substrates. The polypeptide is DNA-directed RNA polymerase subunit alpha (Brucella melitensis biotype 2 (strain ATCC 23457)).